The following is a 78-amino-acid chain: Exodeoxyribonuclease 7 small subunit (78 aa).

This sequence belongs to the XseB family. As to quaternary structure, heterooligomer composed of large and small subunits.

It is found in the cytoplasm. It catalyses the reaction Exonucleolytic cleavage in either 5'- to 3'- or 3'- to 5'-direction to yield nucleoside 5'-phosphates.. In terms of biological role, bidirectionally degrades single-stranded DNA into large acid-insoluble oligonucleotides, which are then degraded further into small acid-soluble oligonucleotides. This is Exodeoxyribonuclease 7 small subunit from Synechococcus sp. (strain JA-3-3Ab) (Cyanobacteria bacterium Yellowstone A-Prime).